We begin with the raw amino-acid sequence, 715 residues long: Elongation factor G (715 aa).

Positions 8-290 (NRYRNIGICA…AVIDFLPAPT (283 aa)) constitute a tr-type G domain. GTP-binding positions include 17–24 (AHVDAGKT), 88–92 (DTPGH), and 142–145 (NKMD).

The protein belongs to the TRAFAC class translation factor GTPase superfamily. Classic translation factor GTPase family. EF-G/EF-2 subfamily.

Its subcellular location is the cytoplasm. Functionally, catalyzes the GTP-dependent ribosomal translocation step during translation elongation. During this step, the ribosome changes from the pre-translocational (PRE) to the post-translocational (POST) state as the newly formed A-site-bound peptidyl-tRNA and P-site-bound deacylated tRNA move to the P and E sites, respectively. Catalyzes the coordinated movement of the two tRNA molecules, the mRNA and conformational changes in the ribosome. This chain is Elongation factor G, found in Ectopseudomonas mendocina (strain ymp) (Pseudomonas mendocina).